The sequence spans 27 residues: U1-poneritoxin-Na3b (27 aa).

It belongs to the ponericin-G family. In terms of tissue distribution, expressed by the venom gland.

Its subcellular location is the secreted. In terms of biological role, shows a broad spectrum of activity against both Gram-positive and Gram-negative bacteria. Also has antimicrobial activity against S.cerevisiae. Has insecticidal and non-hemolytic activity. The chain is U1-poneritoxin-Na3b from Neoponera apicalis (Ant).